We begin with the raw amino-acid sequence, 84 residues long: U21-theraphotoxin-Cg1a 3 (84 aa).

Positions 1–21 (MKVSVLITLAVLGVMFLLTSA) are cleaved as a signal peptide. The propeptide occupies 22-47 (EERGSDQMDSPAWLKSMERIFQSEER). 3 disulfide bridges follow: cysteine 49-cysteine 63, cysteine 56-cysteine 68, and cysteine 62-cysteine 76. At valine 82 the chain carries Valine amide.

It belongs to the neurotoxin 10 (Hwtx-1) family. 05 (F4a) subfamily. In terms of tissue distribution, expressed by the venom gland.

The protein resides in the secreted. In terms of biological role, probable ion channel inhibitor. This chain is U21-theraphotoxin-Cg1a 3, found in Chilobrachys guangxiensis (Chinese earth tiger tarantula).